A 421-amino-acid chain; its full sequence is Glucose-1-phosphate adenylyltransferase (421 aa).

Alpha-D-glucose 1-phosphate is bound by residues Y108, G173, 188 to 189 (EK), and S206.

The protein belongs to the bacterial/plant glucose-1-phosphate adenylyltransferase family. In terms of assembly, homotetramer.

It carries out the reaction alpha-D-glucose 1-phosphate + ATP + H(+) = ADP-alpha-D-glucose + diphosphate. The protein operates within glycan biosynthesis; glycogen biosynthesis. In terms of biological role, involved in the biosynthesis of ADP-glucose, a building block required for the elongation reactions to produce glycogen. Catalyzes the reaction between ATP and alpha-D-glucose 1-phosphate (G1P) to produce pyrophosphate and ADP-Glc. This Mesorhizobium japonicum (strain LMG 29417 / CECT 9101 / MAFF 303099) (Mesorhizobium loti (strain MAFF 303099)) protein is Glucose-1-phosphate adenylyltransferase.